Consider the following 387-residue polypeptide: Zinc finger transcription factor YY1 (387 aa).

C2H2-type zinc fingers lie at residues 79–103 (FLCS…SHIH), 108–132 (YVCD…YLIH), 138–162 (YICT…MKTH), 168–193 (HICP…AAYH), and 230–255 (YACP…KREH). The segment at 201–290 (TPKYTPPAEK…DDGSDQDVYR (90 aa)) is MED18-binding. A disordered region spans residues 258–387 (HLQEENADTP…DDDEETEYED (130 aa)). At Ser-284 the chain carries Phosphoserine. The span at 291 to 305 (KHASNGKGQTHKQQS) shows a compositional bias: basic residues. Residues 319 to 326 (GKKGSTSS) carry the Nuclear localization signal motif. Residues 339–367 (AKETFEEVEREEEEDSEETEEDRDNVEDG) adopt a coiled-coil conformation. Acidic residues-rich tracts occupy residues 344–363 (EEVE…DRDN) and 373–387 (NNED…EYED).

In terms of assembly, interacts with MED18 to suppress disease susceptibility via the repression of genes glutaredoxins GRX480, GRXS13 and thioredoxin TRX-h5. In terms of tissue distribution, mostly expressed in flowers, to a lower extent in seedlings, stems and leaves, and, at low levels, in roots and senescent leaves.

It localises to the nucleus. Functionally, dual-function transcription factor with both repression and activation activities. Binds to 5'-CCATATT-3' motif in target gene promoters (e.g. ABR1). Also binds to G-rich DNA motif 5'-GGGGGCAGTGG-3'. Regulates the expression of genes involved in diverse cellular pathways, including glucose metabolism, photosynthesis, phototropism and stress response (e.g. salt, drought and osmotic stress). Regulates plant immunity, especially during necrotrophic fungal infection (e.g. B.cinerea). Binds to ABR1 promoter and promotes its expression, thus negatively regulating the abscisic acid (ABA) signaling pathway. Represses ABA- and salt-responsive genes expression. This chain is Zinc finger transcription factor YY1, found in Arabidopsis thaliana (Mouse-ear cress).